A 342-amino-acid polypeptide reads, in one-letter code: S-adenosylmethionine:tRNA ribosyltransferase-isomerase (342 aa).

It belongs to the QueA family. Monomer.

Its subcellular location is the cytoplasm. It catalyses the reaction 7-aminomethyl-7-carbaguanosine(34) in tRNA + S-adenosyl-L-methionine = epoxyqueuosine(34) in tRNA + adenine + L-methionine + 2 H(+). It participates in tRNA modification; tRNA-queuosine biosynthesis. In terms of biological role, transfers and isomerizes the ribose moiety from AdoMet to the 7-aminomethyl group of 7-deazaguanine (preQ1-tRNA) to give epoxyqueuosine (oQ-tRNA). The sequence is that of S-adenosylmethionine:tRNA ribosyltransferase-isomerase from Streptococcus pyogenes serotype M12 (strain MGAS2096).